The following is a 373-amino-acid chain: Protein-glutamate methylesterase/protein-glutamine glutaminase 2 (373 aa).

Residues K4–L121 enclose the Response regulatory domain. The residue at position 55 (D55) is a 4-aspartylphosphate. Residues F136–S181 form a disordered region. Over residues A143 to A153 the composition is skewed to pro residues. Positions P154–S181 are enriched in low complexity. One can recognise a CheB-type methylesterase domain in the interval P182–E370. Active-site residues include S197, H224, and D317.

It belongs to the CheB family. Post-translationally, phosphorylated by CheA. Phosphorylation of the N-terminal regulatory domain activates the methylesterase activity.

The protein resides in the cytoplasm. The enzyme catalyses [protein]-L-glutamate 5-O-methyl ester + H2O = L-glutamyl-[protein] + methanol + H(+). It catalyses the reaction L-glutaminyl-[protein] + H2O = L-glutamyl-[protein] + NH4(+). In terms of biological role, involved in chemotaxis. Part of a chemotaxis signal transduction system that modulates chemotaxis in response to various stimuli. Catalyzes the demethylation of specific methylglutamate residues introduced into the chemoreceptors (methyl-accepting chemotaxis proteins or MCP) by CheR. Also mediates the irreversible deamidation of specific glutamine residues to glutamic acid. The sequence is that of Protein-glutamate methylesterase/protein-glutamine glutaminase 2 from Pseudomonas fluorescens (strain ATCC BAA-477 / NRRL B-23932 / Pf-5).